Consider the following 417-residue polypeptide: Gamma-glutamyl phosphate reductase (417 aa).

The protein belongs to the gamma-glutamyl phosphate reductase family.

The protein resides in the cytoplasm. The catalysed reaction is L-glutamate 5-semialdehyde + phosphate + NADP(+) = L-glutamyl 5-phosphate + NADPH + H(+). Its pathway is amino-acid biosynthesis; L-proline biosynthesis; L-glutamate 5-semialdehyde from L-glutamate: step 2/2. Catalyzes the NADPH-dependent reduction of L-glutamate 5-phosphate into L-glutamate 5-semialdehyde and phosphate. The product spontaneously undergoes cyclization to form 1-pyrroline-5-carboxylate. The chain is Gamma-glutamyl phosphate reductase from Escherichia coli O7:K1 (strain IAI39 / ExPEC).